The following is a 43-amino-acid chain: uncharacterized protein (43 aa).

The segment at 1-43 (MFKSRIETGGFQFQVHGDDESAMDDEFIDDDDDQQVVEPVTDN) is disordered. The segment covering 20–35 (ESAMDDEFIDDDDDQQ) has biased composition (acidic residues).

This is an uncharacterized protein from Dictyostelium discoideum (Social amoeba).